A 195-amino-acid chain; its full sequence is Imidazoleglycerol-phosphate dehydratase (195 aa).

Belongs to the imidazoleglycerol-phosphate dehydratase family.

The protein resides in the cytoplasm. It carries out the reaction D-erythro-1-(imidazol-4-yl)glycerol 3-phosphate = 3-(imidazol-4-yl)-2-oxopropyl phosphate + H2O. Its pathway is amino-acid biosynthesis; L-histidine biosynthesis; L-histidine from 5-phospho-alpha-D-ribose 1-diphosphate: step 6/9. The protein is Imidazoleglycerol-phosphate dehydratase of Thermotoga petrophila (strain ATCC BAA-488 / DSM 13995 / JCM 10881 / RKU-1).